A 285-amino-acid polypeptide reads, in one-letter code: Casein kinase II subunit beta-2 (285 aa).

Positions Phe226–His285 are disordered. A compositionally biased stretch (acidic residues) spans Ala229–Glu259. Residues Gly260–Thr272 are compositionally biased toward low complexity. The span at Ala273 to His285 shows a compositional bias: gly residues.

This sequence belongs to the casein kinase 2 subunit beta family. In terms of assembly, tetramer composed of two alpha chains, one beta chain and one beta' chain. Post-translationally, phosphorylated by alpha subunit.

Regulatory subunit of casein kinase II/CK2. As part of the kinase complex regulates the basal catalytic activity of the alpha subunit a constitutively active serine/threonine-protein kinase that phosphorylates a large number of substrates containing acidic residues C-terminal to the phosphorylated serine or threonine. This chain is Casein kinase II subunit beta-2 (ckb-2), found in Neurospora crassa (strain ATCC 24698 / 74-OR23-1A / CBS 708.71 / DSM 1257 / FGSC 987).